The chain runs to 150 residues: Monooxygenase nsrS (150 aa).

The protein belongs to the avfA family.

Its pathway is secondary metabolite biosynthesis. In terms of biological role, monooxygenase; part of the gene cluster that mediates the biosynthesis of the tetrahydroxanthone dimer neosartorin, which exhibits antibacterial activity. The two different monomeric units appear to be synthesized by the same set of enzymes, among which the Baeyer-Villiger monooxygenase nsrF is the key enzyme for the divergence of the biosynthetic routes. The pathway begins with the synthesis of atrochrysone thioester by the polyketide synthase nsrB. The atrochrysone carboxyl ACP thioesterase nsrC then breaks the thioester bond and releases the atrochrysone carboxylic acid from AacuL. Atrochrysone carboxylic acid is decarboxylated by the decarboxylase nsrE, and oxidized by the anthrone oxygenase nsrD to yield emodin. Emodin is then reduced to emodin hydroquinone by the oxidoreductase nsrR. A-ring reduction by the short chain dehydrogenase nsrJ, dehydration by the scytalone dehydratase-like protein nsrI and probable spontaneous re-oxidation, results in overall deoxygenation to chrysophanol. The Baeyer-Villiger monooxygenase nsrF accepts chrysophanol as a substrate to insert one oxygen atom at two different positions to yield the precursors of both monomric units. NsrF is promiscuous/flexible in interacting with the 2 (non methylated and methylated) aromatic rings of chrysophanol, thus diverging the biosynthetic pathway at this point. After the hydrolysis of the lactones, methylesterification by the methyltransferase nsrG yields respectively moniliphenone and 2,2',6'-trihydroxy-4-methyl-6-methoxya-cyldiphenylmethanone. The next steps are the hydroxylation by the FAD-dependent monooxygenase nsrK, followed by isomerization by the monooxygenase nsrQ. The short chain dehydrogenase/reductase nsrO then catalyzes the C-5 ketoreduction to give the xanthone skeleton of blennolide C and 5-acetylblennolide A. The acetyltransferase nsrL has a strict substrate specificity and uses only blennolide A but not blennolide C to yield 5-acetylblennolide A as the single-acetylated product. In the final step of the biosynthesis, the heterodimerization of the 2 xanthones, blennolide C and 5-acetylblennolide A, is catalyzed by the cytochrome P450 monooxygenase nsrP. NsrP can utilize at least three different xanthones as its substrates to perform the dimerization reaction. The chain is Monooxygenase nsrS from Aspergillus novofumigatus (strain IBT 16806).